The primary structure comprises 440 residues: Ribosomal protein uS12 methylthiotransferase RimO (440 aa).

The region spanning 6-116 (PKVGFVSLGC…VVTAVHEVVP (111 aa)) is the MTTase N-terminal domain. C15, C51, C80, C149, C153, and C156 together coordinate [4Fe-4S] cluster. One can recognise a Radical SAM core domain in the interval 135 to 373 (LTPRHYAYLK…MAHQQAISAA (239 aa)). The TRAM domain occupies 376 to 440 (QLKVGKEIEV…DEYDLWAEPV (65 aa)).

The protein belongs to the methylthiotransferase family. RimO subfamily. Requires [4Fe-4S] cluster as cofactor.

It localises to the cytoplasm. The catalysed reaction is L-aspartate(89)-[ribosomal protein uS12]-hydrogen + (sulfur carrier)-SH + AH2 + 2 S-adenosyl-L-methionine = 3-methylsulfanyl-L-aspartate(89)-[ribosomal protein uS12]-hydrogen + (sulfur carrier)-H + 5'-deoxyadenosine + L-methionine + A + S-adenosyl-L-homocysteine + 2 H(+). Catalyzes the methylthiolation of an aspartic acid residue of ribosomal protein uS12. This Pseudomonas paraeruginosa (strain DSM 24068 / PA7) (Pseudomonas aeruginosa (strain PA7)) protein is Ribosomal protein uS12 methylthiotransferase RimO.